The sequence spans 134 residues: Profilin-2 (134 aa).

A disulfide bridge connects residues C13 and C118. Residues 84–100 (AVIRGKKGSGGITIKKT) carry the Involved in PIP2 interaction motif. T114 carries the post-translational modification Phosphothreonine.

It belongs to the profilin family. Occurs in many kinds of cells as a complex with monomeric actin in a 1:1 ratio. In terms of processing, phosphorylated by MAP kinases.

It localises to the cytoplasm. The protein resides in the cytoskeleton. In terms of biological role, binds to actin and affects the structure of the cytoskeleton. At high concentrations, profilin prevents the polymerization of actin, whereas it enhances it at low concentrations. This is Profilin-2 from Olea europaea (Common olive).